Consider the following 803-residue polypeptide: Translation initiation factor IF-2 (803 aa).

Residues 65–75 (PDKVEEKKEHT) show a composition bias toward basic and acidic residues. Positions 65 to 186 (PDKVEEKKEH…PKSRKSKTLK (122 aa)) are disordered. The span at 175–185 (NKPKSRKSKTL) shows a compositional bias: basic residues. Positions 300 to 468 (IRPPVVTIMG…ILLTADAALE (169 aa)) constitute a tr-type G domain. The segment at 309-316 (GHVDHGKT) is G1. 309-316 (GHVDHGKT) lines the GTP pocket. Residues 334–338 (GITQH) are G2. A G3 region spans residues 355-358 (DTPG). GTP contacts are provided by residues 355-359 (DTPGH) and 409-412 (NKID). The interval 409-412 (NKID) is G4. Residues 445–447 (SAK) form a G5 region.

The protein belongs to the TRAFAC class translation factor GTPase superfamily. Classic translation factor GTPase family. IF-2 subfamily.

Its subcellular location is the cytoplasm. One of the essential components for the initiation of protein synthesis. Protects formylmethionyl-tRNA from spontaneous hydrolysis and promotes its binding to the 30S ribosomal subunits. Also involved in the hydrolysis of GTP during the formation of the 70S ribosomal complex. The polypeptide is Translation initiation factor IF-2 (Tropheryma whipplei (strain Twist) (Whipple's bacillus)).